The sequence spans 434 residues: Enolase (434 aa).

Q163 contacts (2R)-2-phosphoglycerate. The Proton donor role is filled by E205. Mg(2+) contacts are provided by D242, E291, and D318. 4 residues coordinate (2R)-2-phosphoglycerate: K343, R372, S373, and K394. Residue K343 is the Proton acceptor of the active site.

This sequence belongs to the enolase family. Mg(2+) serves as cofactor.

It is found in the cytoplasm. The protein resides in the secreted. It localises to the cell surface. It catalyses the reaction (2R)-2-phosphoglycerate = phosphoenolpyruvate + H2O. It functions in the pathway carbohydrate degradation; glycolysis; pyruvate from D-glyceraldehyde 3-phosphate: step 4/5. Its function is as follows. Catalyzes the reversible conversion of 2-phosphoglycerate (2-PG) into phosphoenolpyruvate (PEP). It is essential for the degradation of carbohydrates via glycolysis. In Streptococcus pneumoniae serotype 19F (strain G54), this protein is Enolase.